A 420-amino-acid chain; its full sequence is Glutamyl-tRNA reductase (420 aa).

Substrate is bound by residues 49–52, Ser109, 114–116, and Gln120; these read TCNR and EPQ. The active-site Nucleophile is the Cys50. 189 to 194 contributes to the NADP(+) binding site; that stretch reads GAGETI.

It belongs to the glutamyl-tRNA reductase family. As to quaternary structure, homodimer.

The enzyme catalyses (S)-4-amino-5-oxopentanoate + tRNA(Glu) + NADP(+) = L-glutamyl-tRNA(Glu) + NADPH + H(+). It participates in porphyrin-containing compound metabolism; protoporphyrin-IX biosynthesis; 5-aminolevulinate from L-glutamyl-tRNA(Glu): step 1/2. Catalyzes the NADPH-dependent reduction of glutamyl-tRNA(Glu) to glutamate 1-semialdehyde (GSA). This chain is Glutamyl-tRNA reductase, found in Yersinia pseudotuberculosis serotype O:1b (strain IP 31758).